The primary structure comprises 365 residues: Class I histocompatibility antigen, Gogo-A*0201 alpha chain (365 aa).

Residues 1-24 form the signal peptide; it reads MAVMAPRTLLLLLLGALALTQTWA. Residues 25-114 are alpha-1; it reads GSHSMRYFST…LRGYYNQSEA (90 aa). The Extracellular segment spans residues 25-308; the sequence is GSHSMRYFST…EPSSQPTIPI (284 aa). Residue Asn-110 is glycosylated (N-linked (GlcNAc...) asparagine). The segment at 115–206 is alpha-2; the sequence is GSHTIQKMYG…ENGKETLQRT (92 aa). 2 disulfide bridges follow: Cys-125–Cys-188 and Cys-227–Cys-283. The tract at residues 207–298 is alpha-3; that stretch reads DAPKTHMTHH…SLPKPLTLRW (92 aa). Residues 209–295 enclose the Ig-like C1-type domain; it reads PKTHMTHHAV…QHESLPKPLT (87 aa). The interval 299 to 308 is connecting peptide; it reads EPSSQPTIPI. The helical transmembrane segment at 309 to 332 threads the bilayer; the sequence is VGIIAGLVLFGAVIAGAVIAAVRW. The Cytoplasmic segment spans residues 333–365; the sequence is RRKSSDRKGGSYSQAASSDSAQGSDVSLTACKV. A disordered region spans residues 338 to 365; it reads DRKGGSYSQAASSDSAQGSDVSLTACKV. Over residues 342–359 the composition is skewed to low complexity; sequence GSYSQAASSDSAQGSDVS. Residue Ser-343 is modified to Phosphoserine. Tyr-344 bears the Phosphotyrosine mark. Residues Ser-345, Ser-349, Ser-350, Ser-352, Ser-356, and Ser-359 each carry the phosphoserine modification.

It belongs to the MHC class I family. In terms of assembly, heterodimer of an alpha chain and a beta chain (beta-2-microglobulin).

Its subcellular location is the membrane. Involved in the presentation of foreign antigens to the immune system. The protein is Class I histocompatibility antigen, Gogo-A*0201 alpha chain of Gorilla gorilla gorilla (Western lowland gorilla).